The primary structure comprises 57 residues: DNA-directed RNA polymerase subunit Rpo6 (57 aa).

Belongs to the archaeal Rpo6/eukaryotic RPB6 RNA polymerase subunit family. Part of the RNA polymerase complex.

Its subcellular location is the cytoplasm. The protein localises to the chromosome. The catalysed reaction is RNA(n) + a ribonucleoside 5'-triphosphate = RNA(n+1) + diphosphate. In terms of biological role, DNA-dependent RNA polymerase (RNAP) catalyzes the transcription of DNA into RNA using the four ribonucleoside triphosphates as substrates. In Thermococcus kodakarensis (strain ATCC BAA-918 / JCM 12380 / KOD1) (Pyrococcus kodakaraensis (strain KOD1)), this protein is DNA-directed RNA polymerase subunit Rpo6.